Reading from the N-terminus, the 459-residue chain is Cysteine desulfurase (459 aa).

The N-terminal 17 residues, 1 to 17 (MVGSVAGNMLLRAAWRR), are a transit peptide targeting the mitochondrion. 5 residues coordinate pyridoxal 5'-phosphate: alanine 129, threonine 130, glutamine 237, serine 257, and histidine 259. Lysine 260 carries the post-translational modification N6-(pyridoxal phosphate)lysine. Threonine 297 contacts pyridoxal 5'-phosphate. The active-site Cysteine persulfide intermediate is cysteine 383. Cysteine 383 contributes to the [2Fe-2S] cluster binding site. A Zn(2+)-binding site is contributed by cysteine 383. Cysteine 383 carries the cysteine persulfide modification.

This sequence belongs to the class-V pyridoxal-phosphate-dependent aminotransferase family. NifS/IscS subfamily. In terms of assembly, homodimer. Component of the mitochondrial core iron-sulfur cluster (ISC) complex composed of NFS1, LYRM4, NDUFAB1, ISCU, FXN, and FDX2; this complex is a heterohexamer containing two copies of each monomer. Component of cyteine desulfurase complex composed of NFS1, LYRM4 and NDUFAB1; this complex contributes to the activation of cysteine desulfurase activity and NFS1 stabilization. Interacts (homodimer form) with ISCU (D-state); each monomer interacts with the C-terminal regions of each NFS1 monomer. Interacts with HSPA9. Interacts (via homodimer form) with FDX2. Interacts (via homodimer form) with FXN. Interacts with LYRM4. Component of a complex composed of FXN, NFS1, LYRM4 and ISCU. Requires pyridoxal 5'-phosphate as cofactor. In terms of processing, N-gluconoylated. Cysteine persulfide intermediate is reduced by thiol-containing molecules like glutathione and L-cysteine. Persulfide reduction is a rate-limiting step of cysteine desulfurase catalytic cycle. Ubiquitous.

The protein resides in the mitochondrion. It carries out the reaction (sulfur carrier)-H + L-cysteine = (sulfur carrier)-SH + L-alanine. It catalyses the reaction L-cysteinyl-[cysteine desulfurase] + L-cysteine = S-sulfanyl-L-cysteinyl-[cysteine desulfurase] + L-alanine. Active only in complex with LYRM4. Its function is as follows. Mitochondrial cysteine desulfurase, of the core iron-sulfur cluster (ISC) assembly complex, that catalyzes the desulfuration of L-cysteine to L-alanine, as component of the cysteine desulfurase complex, leading to the formation of a cysteine persulfide intermediate at the active site cysteine residue and participates in the [2Fe-2S] clusters assembly on the scaffolding protein ISCU. The persulfide is then transferred on the flexible Cys loop from the catalytic site of NFS1 to the surface of NFS1. After the NFS1-linked persulfide sulfur is transferred to one of the conserved Cys residues of the scaffold, a reaction assisted by FXN. The core iron-sulfur cluster (ISC) assembly complex is involved in the de novo synthesis of a [2Fe-2S] cluster, the first step of the mitochondrial iron-sulfur protein biogenesis. This process is initiated by the cysteine desulfurase complex (NFS1:LYRM4:NDUFAB1) that produces persulfide which is delivered on the scaffold protein ISCU in a FXN-dependent manner. Then this complex is stabilized by FDX2 which provides reducing equivalents to accomplish the [2Fe-2S] cluster assembly. Finally, the [2Fe-2S] cluster is transferred from ISCU to chaperone proteins, including HSCB, HSPA9 and GLRX5. This chain is Cysteine desulfurase, found in Mus musculus (Mouse).